The primary structure comprises 845 residues: Protein SPA1-RELATED 3 (845 aa).

Over residues 1 to 19 the composition is skewed to polar residues; it reads MEGSSNSNSRGFNTSGVSD. Disordered stretches follow at residues 1–33 and 139–158; these read MEGS…LTTR and CSDS…KEIG. In terms of domain architecture, Protein kinase spans 1-297; sequence MEGSSNSNSR…MSDLLQSEFI (297 aa). Residues 301 to 329 adopt a coiled-coil conformation; the sequence is RDNLEEREAAIELRDRIEEQESLLEFLLL. WD repeat units follow at residues 532 to 571, 581 to 621, 624 to 664, 666 to 706, 710 to 748, 757 to 796, and 812 to 845; these read NSSN…NDNR, AGRS…LVTE, EHKK…SIGT, KTKA…IPLC, GHSK…SGIN, GHTN…PVMS, and DASQ…EMMT. The short motif at 685 to 699 is the DWD box element; sequence AFGSADHKVYYYDLR.

In terms of assembly, interacts with COP1 and CO.

Its subcellular location is the nucleus. Functionally, repressor of photomorphogenesis in the light. Probably part of the COP1/SPA E3 ubiquitin-protein ligase complex. This chain is Protein SPA1-RELATED 3 (SPA3), found in Arabidopsis thaliana (Mouse-ear cress).